The primary structure comprises 93 residues: Regulatory protein RepI (93 aa).

Its function is as follows. This protein is involved in regulating the plasmid copy-number. Increasing the level of this protein results in a higher plasmid copy-number. The polypeptide is Regulatory protein RepI (repI) (Escherichia coli).